Reading from the N-terminus, the 1317-residue chain is ABC transporter C family member 14 (1317 aa).

The ABC transmembrane type-1 1 domain occupies 119 to 404; sequence NKYALISNIF…LPEDIYKAIG (286 aa). 5 helical membrane passes run 127 to 147, 156 to 176, 249 to 269, 341 to 361, and 375 to 395; these read IFITIFIFLSPICLKFLINYI, SILKGILLCCLLCISILGQSI, ILILLGLLCYVVGPSGLVGFG, VLFWIFDHMMIETNATLVLVS, and LDVTFTAMTIFANLKLPLIYL. Residues 426–451 are disordered; that stretch reads ENNQNINFNNNNNNNNNNKNNNNNDD. Over residues 427-449 the composition is skewed to low complexity; sequence NNQNINFNNNNNNNNNNKNNNNN. The 221-residue stretch at 490–710 folds into the ABC transporter 1 domain; the sequence is ENEENIKINE…ISDKNDPNLI (221 aa). 522–529 serves as a coordination point for ATP; sequence GVVGSGKT. 5 consecutive transmembrane segments (helical) span residues 734-754, 778-798, 871-891, 969-989, and 992-1012; these read YFSYGTSGVTLFITISLFFIG, DSFYIGYYLLIIGIFVSLLMI, LISIVFIIPIIIIPLTLLFII, LEVMGCIMVFFTSLAAALFTS, and GLAALSVTTALSLNGYLSWGV. Positions 744–1027 constitute an ABC transmembrane type-1 2 domain; sequence LFITISLFFI…LEVKMNSFQR (284 aa). In terms of domain architecture, ABC transporter 2 spans 1071 to 1306; it reads IEFKNVEIKY…PNSKFNKLIK (236 aa). 1105-1112 contacts ATP; the sequence is GRTGAGKT.

The protein belongs to the ABC transporter superfamily. ABCC family. Conjugate transporter (TC 3.A.1.208) subfamily.

Its subcellular location is the membrane. The protein is ABC transporter C family member 14 (abcC14) of Dictyostelium discoideum (Social amoeba).